The primary structure comprises 49 residues: uncharacterized protein (49 aa).

The interval 1-49 (MSNETFEQNEPKPTKVEELQPGDVEAVEDSTPVREITQTDHINKAMLQI) is disordered. Basic and acidic residues predominate over residues 9–18 (NEPKPTKVEE).

This is an uncharacterized protein from Dictyostelium discoideum (Social amoeba).